Here is a 318-residue protein sequence, read N- to C-terminus: MDATHMSEEAQPTAGPPKNLVSGLIKAVRPRQWIKNLLVLAAPLAAVGSGIEYDYADVAAKVSVAFVVFCLAASSIYLINDARDVEADRAHPTKRFRPIAAGVVPEWMAYSLAGLLAVASLVISWWLTANLAIVMAVYIAVQLAYCFGLKHQAVLDICIVSSGFLIRAIAGGVAADIPLSQWFLLVMAFGSLFMAAGKRYAELQLAERTGAKIRKSLESYTSSYLRFVWTLSATAMVVCYGLWAFSRDRANDLMTLDAQDASWYAVTMIPFTIAILRYAVDIDGGIAGEPEEIALKDRVLQILFLAWIGTIGAAIYFS.

2 consecutive transmembrane segments (helical) span residues 33–53 and 59–79; these read WIKNLLVLAAPLAAVGSGIEY and AAKVSVAFVVFCLAASSIYLI. 5-phospho-alpha-D-ribose 1-diphosphate-binding residues include Lys35 and Tyr77. Residues Asn80 and Asp84 each contribute to the Mg(2+) site. Lys94 contributes to the 5-phospho-alpha-D-ribose 1-diphosphate binding site. Helical transmembrane passes span 99–119 and 121–141; these read IAAGVVPEWMAYSLAGLLAVA and LVISWWLTANLAIVMAVYIAV. Lys150 and Arg167 together coordinate 5-phospho-alpha-D-ribose 1-diphosphate. The next 2 membrane-spanning stretches (helical) occupy residues 153-173 and 177-197; these read AVLDICIVSSGFLIRAIAGGV and IPLSQWFLLVMAFGSLFMAAG. Lys198 is a binding site for trans,octa-cis-decaprenyl phosphate. The next 3 helical transmembrane spans lie at 225-245, 262-282, and 298-318; these read LRFVWTLSATAMVVCYGLWAF, SWYAVTMIPFTIAILRYAVDI, and RVLQILFLAWIGTIGAAIYFS.

The protein belongs to the UbiA prenyltransferase family. DPPR synthase subfamily. Mg(2+) serves as cofactor.

The protein localises to the cell inner membrane. It carries out the reaction trans,octa-cis-decaprenyl phosphate + 5-phospho-alpha-D-ribose 1-diphosphate + H(+) = trans,octa-cis-decaprenylphospho-beta-D-ribofuranose 5-phosphate + diphosphate. It functions in the pathway cell wall biogenesis; cell wall polysaccharide biosynthesis. Its function is as follows. Involved in the biosynthesis of decaprenylphosphoryl arabinose (DPA) a precursor for arabinan synthesis in mycobacterial cell wall biosynthesis. Catalyzes the transfer of a 5-phosphoribosyl residue from phosphoribose diphosphate (PRPP) to decaprenyl phosphate (DP) to form decaprenylphosphoryl-5-phosphoribose (DPPR). The chain is Decaprenyl-phosphate phosphoribosyltransferase from Mycolicibacterium smegmatis (strain ATCC 700084 / mc(2)155) (Mycobacterium smegmatis).